We begin with the raw amino-acid sequence, 430 residues long: Serine hydroxymethyltransferase (430 aa).

A (6S)-5,6,7,8-tetrahydrofolate-binding site is contributed by 120–122 (GHI). Position 226 is an N6-(pyridoxal phosphate)lysine (lysine 226).

It belongs to the SHMT family. Homodimer. Pyridoxal 5'-phosphate is required as a cofactor.

It localises to the cytoplasm. It functions in the pathway amino-acid biosynthesis; glycine biosynthesis; glycine from L-serine: step 1/1. In terms of biological role, catalyzes the reversible interconversion of serine and glycine with a modified folate serving as the one-carbon carrier. Also exhibits a pteridine-independent aldolase activity toward beta-hydroxyamino acids, producing glycine and aldehydes, via a retro-aldol mechanism. This chain is Serine hydroxymethyltransferase, found in Pyrobaculum aerophilum (strain ATCC 51768 / DSM 7523 / JCM 9630 / CIP 104966 / NBRC 100827 / IM2).